We begin with the raw amino-acid sequence, 213 residues long: LIM domain-containing protein PLIM2c (213 aa).

2 consecutive LIM zinc-binding domains span residues 9 to 69 (DKCK…LFKE) and 105 to 165 (DKCA…LFLE). The tract at residues 177 to 213 (ANHRRSTAEEDKTEPKEDEANPTEEETSDAAAEEHES) is disordered. Residues 182 to 195 (STAEEDKTEPKEDE) are compositionally biased toward basic and acidic residues.

As to quaternary structure, interacts with F-actin. Exclusively expressed in pollen grains.

The protein resides in the cytoplasm. It localises to the cytoskeleton. In terms of biological role, binds to actin filaments and promotes cross-linking into thick bundles. Has an actin-stabilizing activity. Associates predominantly with long and dynamic actin bundles in the shank of growing pollen tubes. The actin regulatory activities are inhibited by pH &gt; 6.8 and/or high [Ca(2+)]. This Arabidopsis thaliana (Mouse-ear cress) protein is LIM domain-containing protein PLIM2c.